Here is a 1085-residue protein sequence, read N- to C-terminus: KN motif and ankyrin repeat domain-containing protein 2 (1085 aa).

Residues 136–145 are compositionally biased toward basic and acidic residues; the sequence is KLEEEKDGRR. The interval 136-192 is disordered; it reads KLEEEKDGRRFSNLGSMHSSMAGSNTSLSSAHSFNRAQGGGSYTPMSSGLSTPVSPT. Composition is skewed to polar residues over residues 148–171 and 179–189; these read NLGSMHSSMAGSNTSLSSAHSFNR and TPMSSGLSTPV. Residues 196–216 adopt a coiled-coil conformation; sequence LQHVREQMAVALRKIRELEEQ. The tract at residues 273–295 is disordered; that stretch reads NGAGAANKATGSLSPTTPGSLQD. The segment covering 281–295 has biased composition (polar residues); it reads ATGSLSPTTPGSLQD. A coiled-coil region spans residues 356-383; sequence VGLLEVQLRKTMQELQSAQQQVEAAQKE. 3 disordered regions span residues 557–736, 752–791, and 798–817; these read RKAD…SNVQ, TTTQTQFTSAKPQQEASQSKTADLTAQKGATHSTDGSAKQ, and TTKPAADTATPPTNKQTDSL. The span at 589–600 shows a compositional bias: acidic residues; the sequence is SSSESSEDESDA. Residues 601–611 show a composition bias toward basic and acidic residues; sequence SEYHEATEKLP. Residues 614 to 648 are compositionally biased toward polar residues; it reads ATPQSLVSSCIPQLASETPATQTAQHSTAQIPTNH. The segment covering 649–668 has biased composition (low complexity); that stretch reads TPAAQTTSQSHTTDATTQQH. 2 stretches are compositionally biased toward polar residues: residues 706 to 736 and 760 to 788; these read NPPSTATSLEQNSVQLSSATQQSKATDSNVQ and SAKPQQEASQSKTADLTAQKGATHSTDGS. Residues 798-810 show a composition bias toward low complexity; that stretch reads TTKPAADTATPPT. ANK repeat units follow at residues 895–925, 929–962, 967–996, 1000–1030, and 1034–1063; these read NGNTALHYTVSHSNFPVVKLLLDTGLCNADK, AGYTAIMLTALAAFSSDSDLQTVLQLLRTGDVNA, AGQTALMLAVSHGRGDMVKALLACGAQVNL, DGSTALMCACEHGHVDIVRQLLSVPGCDATL, and DGSTALSIALEASQNDIAVLLYAHLNFAKP. The segment at 1064–1085 is disordered; sequence PSPVSPKSPILGSSPPSSSELK. The segment covering 1070-1085 has biased composition (low complexity); the sequence is KSPILGSSPPSSSELK.

The protein localises to the cytoplasm. It is found in the mitochondrion. Functionally, may be involved in different biological processes including transcription and apoptosis by sequestering specific proteins outside of the nucleus. Involved in actin stress fibers formation probably through its interaction with ARHGDIA and the regulation of the Rho signaling pathway. May thereby play a role in cell adhesion and migration, regulating for instance podocytes migration during development of the kidney. In Danio rerio (Zebrafish), this protein is KN motif and ankyrin repeat domain-containing protein 2 (kank2).